Reading from the N-terminus, the 350-residue chain is Protein RecA (350 aa).

Residue glycine 65–threonine 72 coordinates ATP. The segment at histidine 326–lysine 350 is disordered. Over residues glycine 340–lysine 350 the composition is skewed to basic and acidic residues.

Belongs to the RecA family.

The protein localises to the cytoplasm. In terms of biological role, can catalyze the hydrolysis of ATP in the presence of single-stranded DNA, the ATP-dependent uptake of single-stranded DNA by duplex DNA, and the ATP-dependent hybridization of homologous single-stranded DNAs. It interacts with LexA causing its activation and leading to its autocatalytic cleavage. The sequence is that of Protein RecA from Clostridium novyi (strain NT).